A 161-amino-acid polypeptide reads, in one-letter code: Phosphopantetheine adenylyltransferase (161 aa).

Substrate is bound at residue Ser-8. ATP-binding positions include 8 to 9 (SF) and His-16. Substrate-binding residues include Lys-40, Thr-72, and Arg-86. ATP contacts are provided by residues 87 to 89 (GLR), Glu-97, and 122 to 128 (HSFLSSS).

Belongs to the bacterial CoaD family. Homohexamer. The cofactor is Mg(2+).

It localises to the cytoplasm. The catalysed reaction is (R)-4'-phosphopantetheine + ATP + H(+) = 3'-dephospho-CoA + diphosphate. The protein operates within cofactor biosynthesis; coenzyme A biosynthesis; CoA from (R)-pantothenate: step 4/5. Reversibly transfers an adenylyl group from ATP to 4'-phosphopantetheine, yielding dephospho-CoA (dPCoA) and pyrophosphate. This Prochlorococcus marinus (strain SARG / CCMP1375 / SS120) protein is Phosphopantetheine adenylyltransferase.